Here is a 118-residue protein sequence, read N- to C-terminus: MRHLKSGRKLNRHSSHRLALYRNQAKSLLTHGRITTTVPKAKELRGFVDHLIHLAKRGDLHARRLVLRDLQDVKLVRKLFDEIAPRYRDRQGGYTRVLKLAERRRGDGAPLALVELVE.

Belongs to the bacterial ribosomal protein bL17 family. In terms of assembly, part of the 50S ribosomal subunit. Contacts protein L32.

This Thermus thermophilus (strain ATCC BAA-163 / DSM 7039 / HB27) protein is Large ribosomal subunit protein bL17.